Reading from the N-terminus, the 670-residue chain is Transcription factor Ken 2 (670 aa).

In terms of domain architecture, BTB spans 108 to 176 (TDLLLICDGK…LYSGQVYVRS (69 aa)). Disordered regions lie at residues 200–288 (SDGS…DRDR) and 307–470 (NNHP…SDDA). The span at 218–230 (NRNTEGITGSSVV) shows a compositional bias: polar residues. Residues 325–338 (HHLHHHHHHHHRQL) show a composition bias toward basic residues. Composition is skewed to gly residues over residues 351 to 368 (GGGS…GESG) and 389 to 400 (SGGGGAGSGRRS). A compositionally biased stretch (acidic residues) spans 407 to 419 (EPAEDDEDYELDV). The span at 451 to 464 (SDPVNLSIVKQQQD) shows a compositional bias: polar residues. The C2H2-type 1; degenerate zinc finger occupies 586-594 (NLKTHLRVH). C2H2-type zinc fingers lie at residues 600–623 (FACR…CSVH) and 636–658 (YTCC…LSGH).

It localises to the nucleus. In terms of biological role, transcription factor required for terminalia development. Negative regulator of the JAK/STAT pathway: represses JAK/STAT-dependent expression of ventral veins lacking (vvl) in the posterior spiracles. The protein is Transcription factor Ken 2 of Culex quinquefasciatus (Southern house mosquito).